The primary structure comprises 301 residues: Very-long-chain aldehyde decarbonylase GL1-10 (301 aa).

3 consecutive transmembrane segments (helical) span residues 36 to 56 (VLFW…PLPV), 94 to 114 (FFLV…MVGI), and 187 to 207 (SFVG…WIVL). The Fatty acid hydroxylase domain maps to 131–265 (LVYFLVEDYL…FTYCDYLYGT (135 aa)).

Belongs to the sterol desaturase family. Homodimer. Expressed ubiquitously.

The protein localises to the endoplasmic reticulum membrane. It carries out the reaction a long-chain fatty aldehyde + 2 NADPH + O2 + H(+) = a long-chain alkane + formate + 2 NADP(+) + H2O. In terms of biological role, aldehyde decarbonylase involved in the conversion of aldehydes to alkanes. Core component of a very-long-chain alkane synthesis complex. The chain is Very-long-chain aldehyde decarbonylase GL1-10 from Oryza sativa subsp. japonica (Rice).